A 218-amino-acid polypeptide reads, in one-letter code: Zinc finger CCHC-type and RNA-binding motif-containing protein 1 (218 aa).

The RRM domain maps to 10-88 (STVYVSNLPF…RAIKASIAKD (79 aa)). The CCHC-type zinc-finger motif lies at 105-122 (SRCYECGDTGHLSYACPK). The tract at residues 119–218 (ACPKNMLGER…YFSDEDELSD (100 aa)) is disordered. Residues 132–188 (QKKEKKKRKRLVEEEEEEVVEEEESEDEGEDPALDSLSQAIAFQQARIDEEKNKYRH) adopt a coiled-coil conformation. The segment covering 144 to 164 (EEEEEEVVEEEESEDEGEDPA) has biased composition (acidic residues). Residues 178–201 (RIDEEKNKYRHDPAEASTSEDSRR) are compositionally biased toward basic and acidic residues.

As to quaternary structure, component of the U11/U12 snRNPs that are part of the U12-type spliceosome.

The protein resides in the nucleus. This Xenopus laevis (African clawed frog) protein is Zinc finger CCHC-type and RNA-binding motif-containing protein 1 (zcrb1).